The chain runs to 630 residues: Putative F-box/LRR-repeat protein At3g49150 (630 aa).

One can recognise an F-box domain in the interval K15–A63. 9 LRR repeats span residues C101–C129, R152–K178, L180–N205, C228–D253, I300–V325, D337–G362, C406–Y436, D437–R465, and D567–W590.

The protein is Putative F-box/LRR-repeat protein At3g49150 of Arabidopsis thaliana (Mouse-ear cress).